Consider the following 82-residue polypeptide: RNA-binding protein BH0128 (82 aa).

The protein belongs to the eukaryotic ribosomal protein eL8 family.

The sequence is that of RNA-binding protein BH0128 from Halalkalibacterium halodurans (strain ATCC BAA-125 / DSM 18197 / FERM 7344 / JCM 9153 / C-125) (Bacillus halodurans).